The sequence spans 555 residues: GPI-anchor transamidase component PIGS (555 aa).

The Cytoplasmic portion of the chain corresponds to 2-18 (AAAGAAATDLEVVRGKR). The a cardiolipin site is built by R15 and R18. A helical membrane pass occupies residues 19–39 (SALFFAAVAILLGLPLWWKTT). The Lumenal segment spans residues 40 to 517 (ETYRAPLPYS…LHLLYFPDDQ (478 aa)). Residues N267 and N370 are each glycosylated (N-linked (GlcNAc...) asparagine). Residues 518 to 532 (KFAIYIPLFLPMAVP) form a helical membrane-spanning segment. The Cytoplasmic segment spans residues 533–555 (ILLSLVKIFQETRKSWKKPEKID).

Belongs to the PIGS family. As to quaternary structure, heteropentamer. Part of the GPI-anchor transamidase complex, consisting of PIGK, PIGT, PIGS, PIGU and GAA1.

It is found in the endoplasmic reticulum membrane. It functions in the pathway glycolipid biosynthesis; glycosylphosphatidylinositol-anchor biosynthesis. Component of the glycosylphosphatidylinositol-anchor (GPI-anchor) transamidase (GPI-T) complex that catalyzes the formation of the linkage between a proprotein and a GPI-anchor and participates in GPI anchored protein biosynthesis. The sequence is that of GPI-anchor transamidase component PIGS from Mus musculus (Mouse).